The chain runs to 688 residues: MKMASSSSALSFPLSNIPTCSKKSQQFQKPASLSKSSHTHKPSLKTQILHHKFTKRNLLSLTTALGFTSALGTVLAHPAKAEPEAPIEATSNRMSYSRFLQHLKENEVKKVDLIENGTVAIVEISNPVVGKIQRVRVNLPGLPVDLVREMKEKNVDFAAHPMNVNWGAFLLNFLGNLGFPLILLVSLLLTSSSRRNPAGPNLPFGLGRSKAKFQMEPNTGITFEDVAGVDEAKQDFEEIVEFLKTPEKFSALGAKIPKGVLLTGPPGTGKTLLAKAIAGEAGVPFFSLSGSEFIEMFVGVGASRARDLFNKAKANSPCIVFIDEIDAVGRMRGTGIGGGNDEREQTLNQILTEMDGFAGNTGVIVIAATNRPEILDSALLRPGRFDRQVSVGLPDIRGREEILKVHSRSKKLDKDVSLSVIAMRTPGFSGADLANLMNEAAILAGRRGKDKITLTEIDDSIDRIVAGMEGTKMIDGKSKAIVAYHEVGHAICATLTEGHDPVQKVTLVPRGQARGLTWFLPGEDPTLVSKQQLFARIVGGLGGRAAEDVIFGEPEITTGAAGDLQQVTEIARQMVTMFGMSEIGPWALTDPAVKQNDVVLRMLARNSMSEKLAEDIDSCVKKIIGDAYEVAKKHVRNNREAIDKLVDVLLEKETLTGDEFRAILSEYTDQPLNTDGDVRIRINDLISV.

The N-terminal 75 residues, 1–75, are a transit peptide targeting the chloroplast; the sequence is MKMASSSSAL…GFTSALGTVL (75 aa). Residues 25–36 show a composition bias toward polar residues; that stretch reads QQFQKPASLSKS. The segment at 25 to 44 is disordered; that stretch reads QQFQKPASLSKSSHTHKPSL. The transit peptide at 76–83 directs the protein to the thylakoid; sequence AHPAKAEP. The Lumenal, thylakoid portion of the chain corresponds to 84-168; that stretch reads EAPIEATSNR…AHPMNVNWGA (85 aa). Residues 169–189 form a helical membrane-spanning segment; the sequence is FLLNFLGNLGFPLILLVSLLL. The Stromal segment spans residues 190-688; it reads TSSSRRNPAG…RIRINDLISV (499 aa). Position 264-271 (264-271) interacts with ATP; the sequence is GPPGTGKT. Zn(2+) is bound at residue His485. Residue Glu486 is part of the active site. 2 residues coordinate Zn(2+): His489 and Asp563.

This sequence in the N-terminal section; belongs to the AAA ATPase family. It in the C-terminal section; belongs to the peptidase M41 family. The cofactor is Zn(2+).

The protein resides in the plastid. Its subcellular location is the chloroplast thylakoid membrane. In terms of biological role, probable ATP-dependent zinc metallopeptidase. Involved in the degradation of the light-harvesting complex of photosystem II (LHC II) during senescence or high light acclimation. This is ATP-dependent zinc metalloprotease FTSH 6, chloroplastic (FTSH6) from Arabidopsis thaliana (Mouse-ear cress).